Reading from the N-terminus, the 832-residue chain is Dolichyl-phosphate-mannose--protein mannosyltransferase 6 (832 aa).

Residues 1 to 44 (MATGYSTGVSPFDLDENNHNDSIHHRHQNHHSQSHDSSGERDDT) are disordered. Residues asparagine 20 and asparagine 59 are each glycosylated (N-linked (GlcNAc...) asparagine). 7 consecutive transmembrane segments (helical) span residues 135-155 (FYFD…GYLA), 175-194 (YVFM…PLAY), 206-227 (TCWL…SKFI), 232-252 (MLLF…TLAI), 266-286 (LEIK…SVKW), 293-311 (ALVG…YQTF), and 327-347 (LIHW…IYVA). N-linked (GlcNAc...) asparagine glycosylation is present at asparagine 357. Residues 383–437 (PRSVAFGSLVTIRSQGLSPNLIHSHPHNYPQGSQEQQVTTYGFKDDNNEFLFEFG) enclose the MIR 1 domain. Asparagine 453 carries an N-linked (GlcNAc...) asparagine glycan. MIR domains are found at residues 466–522 (HVII…IEIQ) and 537–595 (PSEI…IEKH). 4 consecutive transmembrane segments (helical) span residues 676–696 (ITWI…VVGI), 723–743 (LLAA…VPFI), 755–775 (VPAL…ILNL), and 787–807 (IFKV…FWYF).

It belongs to the glycosyltransferase 39 family.

It localises to the endoplasmic reticulum membrane. The enzyme catalyses a di-trans,poly-cis-dolichyl beta-D-mannosyl phosphate + L-seryl-[protein] = 3-O-(alpha-D-mannosyl)-L-seryl-[protein] + a di-trans,poly-cis-dolichyl phosphate + H(+). It carries out the reaction a di-trans,poly-cis-dolichyl beta-D-mannosyl phosphate + L-threonyl-[protein] = 3-O-(alpha-D-mannosyl)-L-threonyl-[protein] + a di-trans,poly-cis-dolichyl phosphate + H(+). The protein operates within protein modification; protein glycosylation. In terms of biological role, protein mannosyltransferase (PMT) involved in hyphal morphogenesis and drug sensitivity. Transfers mannose from Dol-P-mannose to Ser or Thr residues on proteins. PMT1, PMT2 and PMT4 account for most of the protein-O-glycosylation activity, while PMT5 and PMT6 may specifically modulate a much narrower spectrum of target proteins. Required for biofilm formation and virulence. The sequence is that of Dolichyl-phosphate-mannose--protein mannosyltransferase 6 (PMT6) from Candida albicans (strain SC5314 / ATCC MYA-2876) (Yeast).